We begin with the raw amino-acid sequence, 319 residues long: Acetyl-coenzyme A carboxylase carboxyl transferase subunit alpha (319 aa).

Residues Asn-35–Asp-296 form the CoA carboxyltransferase C-terminal domain.

Belongs to the AccA family. As to quaternary structure, acetyl-CoA carboxylase is a heterohexamer composed of biotin carboxyl carrier protein (AccB), biotin carboxylase (AccC) and two subunits each of ACCase subunit alpha (AccA) and ACCase subunit beta (AccD).

The protein localises to the cytoplasm. The catalysed reaction is N(6)-carboxybiotinyl-L-lysyl-[protein] + acetyl-CoA = N(6)-biotinyl-L-lysyl-[protein] + malonyl-CoA. The protein operates within lipid metabolism; malonyl-CoA biosynthesis; malonyl-CoA from acetyl-CoA: step 1/1. Component of the acetyl coenzyme A carboxylase (ACC) complex. First, biotin carboxylase catalyzes the carboxylation of biotin on its carrier protein (BCCP) and then the CO(2) group is transferred by the carboxyltransferase to acetyl-CoA to form malonyl-CoA. This chain is Acetyl-coenzyme A carboxylase carboxyl transferase subunit alpha, found in Citrobacter koseri (strain ATCC BAA-895 / CDC 4225-83 / SGSC4696).